Here is a 1306-residue protein sequence, read N- to C-terminus: Putative late blight resistance protein homolog R1A-10 (1306 aa).

Coiled-coil stretches lie at residues 407-428 (SDSL…ESLQ) and 520-542 (PRMK…KLLS). Positions 521–808 (RMKEEIVGFE…SEAFIKSSEG (288 aa)) constitute an NB-ARC domain. 554–561 (GMPGLGKT) contributes to the ATP binding site. LRR repeat units lie at residues 858 to 881 (AEEN…VYSH), 921 to 935 (LSSL…ILPN), 936 to 961 (FKFL…PYLR), 979 to 1007 (LWNL…VWDM), 1010 to 1035 (LRHL…NLDD), 1057 to 1081 (TPNL…ALNF), 1082 to 1106 (PIRL…ISAP), 1110 to 1129 (YLKL…TADH), 1130 to 1153 (LKNL…KVSN), 1156 to 1181 (FPQL…AFPN), and 1216 to 1240 (ESVV…NFKL). The HMA domain maps to 1240–1306 (LVLIEKWPKF…KLRKCGMPGL (67 aa)).

It belongs to the disease resistance NB-LRR family.

The protein localises to the cytoplasm. The protein resides in the membrane. In terms of biological role, confers resistance to late blight (Phytophthora infestans) races carrying the avirulence gene Avr1. Resistance proteins guard the plant against pathogens that contain an appropriate avirulence protein via an indirect interaction with this avirulence protein. That triggers a defense system including the hypersensitive response, which restricts the pathogen growth. In Solanum demissum (Wild potato), this protein is Putative late blight resistance protein homolog R1A-10 (R1A-10).